The chain runs to 612 residues: 1,8-cineole synthase, chloroplastic (612 aa).

The N-terminal 52 residues, 1–52 (MALVSVAPLASRSCLSKSLISSTHELKPLRRTILPTLRWKSATPSINMCLTT), are a transit peptide targeting the chloroplast. Mg(2+)-binding residues include Asp363, Asp367, and Asp515. A DDXXD motif motif is present at residues 363 to 367 (DDIYD).

It belongs to the terpene synthase family. Tpsd subfamily. Mg(2+) serves as cofactor. Requires Mn(2+) as cofactor.

The protein resides in the plastid. It localises to the chloroplast. It carries out the reaction (2E)-geranyl diphosphate + H2O = 1,8-cineole + diphosphate. Its pathway is terpene metabolism; oleoresin biosynthesis. Functionally, terpene synthase (TPS) involved in the biosynthesis of monoterpene natural products included in conifer oleoresin secretions and volatile emissions; these compounds contribute to biotic and abiotic stress defense against herbivores and pathogens. Catalyzes the conversion of (2E)-geranyl diphosphate (GPP) to 1,8-cineole. This Picea sitchensis (Sitka spruce) protein is 1,8-cineole synthase, chloroplastic.